A 378-amino-acid polypeptide reads, in one-letter code: Succinyl-diaminopimelate desuccinylase 2 (378 aa).

Histidine 68 contacts Zn(2+). Aspartate 70 is an active-site residue. Residue aspartate 101 coordinates Zn(2+). Glutamate 135 acts as the Proton acceptor in catalysis. 3 residues coordinate Zn(2+): glutamate 136, glutamate 164, and histidine 350.

Belongs to the peptidase M20A family. DapE subfamily. In terms of assembly, homodimer. Zn(2+) serves as cofactor. It depends on Co(2+) as a cofactor.

The catalysed reaction is N-succinyl-(2S,6S)-2,6-diaminopimelate + H2O = (2S,6S)-2,6-diaminopimelate + succinate. The protein operates within amino-acid biosynthesis; L-lysine biosynthesis via DAP pathway; LL-2,6-diaminopimelate from (S)-tetrahydrodipicolinate (succinylase route): step 3/3. In terms of biological role, catalyzes the hydrolysis of N-succinyl-L,L-diaminopimelic acid (SDAP), forming succinate and LL-2,6-diaminopimelate (DAP), an intermediate involved in the bacterial biosynthesis of lysine and meso-diaminopimelic acid, an essential component of bacterial cell walls. The polypeptide is Succinyl-diaminopimelate desuccinylase 2 (Alteromonas mediterranea (strain DSM 17117 / CIP 110805 / LMG 28347 / Deep ecotype)).